The primary structure comprises 557 residues: Inositol-3-phosphate synthase 1 (557 aa).

Gly-67, Gly-68, Asn-69, Asn-70, Asp-141, Ser-177, Val-178, Gln-188, Arg-191, Thr-228, Ala-229, Asn-230, Thr-231, Gly-278, Ser-279, Asp-303, Ser-306, Asn-337, Asn-338, Asp-339, and Lys-352 together coordinate NAD(+). Ser-279 carries the phosphoserine modification. Ser-357 carries the post-translational modification Phosphoserine. NAD(+) contacts are provided by Gly-390, Asp-391, Asp-419, and Ser-420. Ser-523 is subject to Phosphoserine. Positions 527–557 (CKKGSAPTAPNGCTGDANGHSQAEAPQMPTT) are disordered.

This sequence belongs to the myo-inositol 1-phosphate synthase family. Requires NAD(+) as cofactor. Expressed in testis (at protein level).

It localises to the cytoplasm. It carries out the reaction D-glucose 6-phosphate = 1D-myo-inositol 3-phosphate. The protein operates within polyol metabolism; myo-inositol biosynthesis; myo-inositol from D-glucose 6-phosphate: step 1/2. Its function is as follows. Key enzyme in myo-inositol biosynthesis pathway that catalyzes the conversion of glucose 6-phosphate to 1-myo-inositol 1-phosphate in a NAD-dependent manner. Rate-limiting enzyme in the synthesis of all inositol-containing compounds. The sequence is that of Inositol-3-phosphate synthase 1 (ISYNA1) from Bos taurus (Bovine).